Consider the following 98-residue polypeptide: Small ribosomal subunit protein eS24 (98 aa).

It belongs to the eukaryotic ribosomal protein eS24 family.

The protein is Small ribosomal subunit protein eS24 of Thermococcus onnurineus (strain NA1).